Reading from the N-terminus, the 325-residue chain is Putative HTH-type transcriptional regulatory protein HQ_3058A (325 aa).

An HTH cro/C1-type domain is found at 132–186 (LADEREERGWSLGRLATELGVSRRTVSKYEDGMNASIEIAIQLEEVFDEPFSSPL). A DNA-binding region (H-T-H motif) is located at residues 143–162 (LGRLATELGVSRRTVSKYED). Positions 189 to 211 (MEGAESVRDSEPTPDDPDPDADD) are disordered. Over residues 200–211 (PTPDDPDPDADD) the composition is skewed to acidic residues.

In Haloquadratum walsbyi (strain DSM 16790 / HBSQ001), this protein is Putative HTH-type transcriptional regulatory protein HQ_3058A.